Here is a 42-residue protein sequence, read N- to C-terminus: Photosystem II reaction center protein J (42 aa).

The helical transmembrane segment at 10–30 threads the bilayer; the sequence is IPLWLIATVAGILVLTVVGIF.

The protein belongs to the PsbJ family. In terms of assembly, PSII is composed of 1 copy each of membrane proteins PsbA, PsbB, PsbC, PsbD, PsbE, PsbF, PsbH, PsbI, PsbJ, PsbK, PsbL, PsbM, PsbT, PsbX, PsbY, PsbZ, Psb30/Ycf12, at least 3 peripheral proteins of the oxygen-evolving complex and a large number of cofactors. It forms dimeric complexes.

The protein localises to the plastid. It is found in the chloroplast thylakoid membrane. Functionally, one of the components of the core complex of photosystem II (PSII). PSII is a light-driven water:plastoquinone oxidoreductase that uses light energy to abstract electrons from H(2)O, generating O(2) and a proton gradient subsequently used for ATP formation. It consists of a core antenna complex that captures photons, and an electron transfer chain that converts photonic excitation into a charge separation. This Chara vulgaris (Common stonewort) protein is Photosystem II reaction center protein J.